Here is a 943-residue protein sequence, read N- to C-terminus: MIDLSFLTEEEQEAIMKVLQRDAALKRAEEERVRHLPEKVKDDQQLKNMSGQWFYEAKAKRHRDRIHGADIIRVSMRKKRPQVADEQSKDRANRAKESWVNNVHKDAFLPPELTGVVEEPEEDVAPASPSSSVVNPVSTMIDASQENTRKSAISPAKPRKNPFNSSMLPEDHLSQQTKNEQSKNGKTGLFQTSKEGELSESKEESSILDISSQKLEKPKQTLPGPESGFPIKAPVPKPRKMIYKSQDLKQDDNQPFPRQRTDSLTTRGAPRGILKRNSSSSSTDSETVRFHQNFEPKSKIVSLGLTIHERISEKEHSLEDDSPSNSLEPLKHVRFSAVKDELPQSSGLVHGREVGEFSVLESDRLKNGTEDAGLTDEVWNDPQPSQYTNGLPFQSSASSPSPSKNETSQPTTSGSFPINEHPSSKEFLTTRAQSTENSHTINEHKTSSSELSKNPADELSCTEPESSQVPDCSSRDHQQGSEEEPSPVLKILERSAARKMPSKSLEDISSDSSNQAKVDNLPEELVRSAEDDQKADQEPDTNECIPGISTVSSQPDNQFSHPDKLKRMSKSVPAFLQDESDDRETDTASEGSYQLSRHKKSPSSLTNLSSNSGMTSLSSVSGSVMSVYSGDFGNLEVKGSIQFAIDYVDSLKELHVFVAQCKDLAAADIKKQRSDPYVKTYLLPDKGKMGKKKTLVVKKTLNPVYNEILRYKINKQILKTQKLNLSVWHRDTFKRNSFLGEVELDLETWDWDNKQNKQLKWYPLKRKTAPVPLEAENRGEMKLALQYVPEPVPGKKLPTTGEVHIWVKECLDLPLLRGSHLNSFVKCTILPDTSRKSRQKTRAVGKTTNPVFNHTMVYDGFRPEDLTEACVELTVWDHYKLTNQFLGGLRIGFGTGKSYGTEVDWMDSTSEEVALWEKMVKSPNTWIEAILPLRMLLIAKISK.

The RabBD domain maps to 1–57 (MIDLSFLTEEEQEAIMKVLQRDAALKRAEEERVRHLPEKVKDDQQLKNMSGQWFYEA). Disordered stretches follow at residues 77-99 (RKKR…KESW), 118-291 (EEPE…VRFH), and 361-613 (ESDR…SNSG). Residues 82–99 (QVADEQSKDRANRAKESW) are compositionally biased toward basic and acidic residues. Residues 125 to 138 (APASPSSSVVNPVS) are compositionally biased toward low complexity. The segment covering 174–192 (SQQTKNEQSKNGKTGLFQT) has biased composition (polar residues). Over residues 194-205 (KEGELSESKEES) the composition is skewed to basic and acidic residues. Composition is skewed to polar residues over residues 382-394 (PQPS…LPFQ), 404-416 (KNET…SGSF), and 426-440 (EFLT…NSHT). The span at 524–537 (ELVRSAEDDQKADQ) shows a compositional bias: basic and acidic residues. Polar residues predominate over residues 549-560 (STVSSQPDNQFS). Residues 603–613 (SSLTNLSSNSG) show a composition bias toward low complexity. C2 domains lie at 637–762 (VKGS…LKWY) and 777–906 (NRGE…VDWM).

Monomer. Binds NRXN1. Binds RAB27A that has been activated by GTP-binding via its N-terminus. Interacts with RAB27B.

The protein localises to the cell membrane. In terms of biological role, may act as a RAB27A effector protein and play a role in cytotoxic granule exocytosis in lymphocytes. This chain is Synaptotagmin-like protein 2 (SYTL2), found in Bos taurus (Bovine).